Consider the following 138-residue polypeptide: ATP synthase epsilon chain, chloroplastic (138 aa).

The protein belongs to the ATPase epsilon chain family. In terms of assembly, F-type ATPases have 2 components, CF(1) - the catalytic core - and CF(0) - the membrane proton channel. CF(1) has five subunits: alpha(3), beta(3), gamma(1), delta(1), epsilon(1). CF(0) has three main subunits: a, b and c.

It localises to the plastid. It is found in the chloroplast thylakoid membrane. Functionally, produces ATP from ADP in the presence of a proton gradient across the membrane. This Galdieria sulphuraria (Red alga) protein is ATP synthase epsilon chain, chloroplastic.